Reading from the N-terminus, the 154-residue chain is Ribosome maturation factor RimP (154 aa).

The protein belongs to the RimP family.

It is found in the cytoplasm. In terms of biological role, required for maturation of 30S ribosomal subunits. The polypeptide is Ribosome maturation factor RimP (Cyanothece sp. (strain PCC 7425 / ATCC 29141)).